Consider the following 146-residue polypeptide: Late protein OPG112 (146 aa).

The helical transmembrane segment at 10–32 (LAMTAFFGELNTLDIMALIMSIF) threads the bilayer.

The protein belongs to the orthopoxvirus OPG112 family.

Its subcellular location is the host membrane. It localises to the host cytoplasm. Its function is as follows. Contributes to the formation of crescents and immature virions (IV). Interacts with phosphatidylinositol-3-phosphate (PI3P) and phosphatidylinositol-4-phosphate (PI4P) lipids in order to form virion membranes. Mechanistically, mediates proper formation of OPG125-hexamers, and hence the honey comb lattice and spherical immature virus. The chain is Late protein OPG112 (OPG112) from Homo sapiens (Human).